A 1194-amino-acid chain; its full sequence is ATP-dependent RNA helicase DHX30 (1194 aa).

Positions 1 to 10 (MFSLDSFRKD) are enriched in basic and acidic residues. Residues 1 to 27 (MFSLDSFRKDRAQHRQRQCKLPPPRLP) form a disordered region. 2 positions are modified to phosphoserine: S6 and R15. The 69-residue stretch at 53–121 (PKNLLNSVIG…QAAAAACQLF (69 aa)) folds into the DRBM domain. The disordered stretch occupies residues 150-199 (ADSWWRPEPTMPPTSWRQLNPESIRPGGPGGLSRSLGREEEEDEEEELEE). A compositionally biased stretch (acidic residues) spans 188–199 (EEEEDEEEELEE). Residues S226 and S380 each carry the phosphoserine modification. In terms of domain architecture, Helicase ATP-binding spans 444-612 (LNAIEQHPVV…FGGCPVIKVP (169 aa)). ATP is bound at residue 457-464 (GDTGCGKT). The short motif at 559-562 (DEVH) is the DEAH box element. Residues 654–827 (LVTDLVLHID…NLVLQAKIHM (174 aa)) form the Helicase C-terminal domain.

Belongs to the DEAD box helicase family. DEAH subfamily. In terms of assembly, identified in a complex with TFAM and SSBP1. Interacts with AGO1 and AGO2. Interacts (via N-terminus) with ZC3HAV1 (via N-terminal domain) in an RNA-independent manner. Found in a complex with GRSF1, DDX28, FASTKD2 and FASTKD5. Post-translationally, phosphorylated on Ser-15.

It localises to the cytoplasm. Its subcellular location is the mitochondrion. The protein localises to the mitochondrion matrix. It is found in the mitochondrion nucleoid. It carries out the reaction ATP + H2O = ADP + phosphate + H(+). Functionally, RNA-dependent helicase. Plays an important role in the assembly of the mitochondrial large ribosomal subunit. Required for optimal function of the zinc-finger antiviral protein ZC3HAV1. Associates with mitochondrial DNA. Involved in nervous system development and differentiation through its involvement in the up-regulation of a number of genes which are required for neurogenesis, including GSC, NCAM1, neurogenin, and NEUROD. This chain is ATP-dependent RNA helicase DHX30 (DHX30), found in Homo sapiens (Human).